We begin with the raw amino-acid sequence, 71 residues long: Large ribosomal subunit protein uL29 (71 aa).

It belongs to the universal ribosomal protein uL29 family.

The protein is Large ribosomal subunit protein uL29 of Synechococcus sp. (strain RCC307).